We begin with the raw amino-acid sequence, 113 residues long: Carboxysome shell protein CcmK4 (113 aa).

The 87-residue stretch at 5–91 (AIGSLETKGF…PHENVEAVFP (87 aa)) folds into the BMC domain.

Belongs to the bacterial microcompartments protein family. CcmK subfamily. Homohexamer. Interacts stably with CcmK3, probably forms heterohexamers with a 1:2 CcmK3:CcmK4 stoichiometry.

The protein resides in the carboxysome. In terms of biological role, one of the shell proteins of the carboxysome, a polyhedral inclusion where RuBisCO (ribulose bisphosphate carboxylase, rbcL-rbcS) is sequestered. Assembles into hexamers which make sheets that form the facets of the polyhedral carboxysome. The hexamer central pore probably regulates metabolite flux. A minor shell protein of the carboxysome, a polyhedral inclusion where RuBisCO (ribulose bisphosphate carboxylase, rbcL-rbcS) is sequestered. Hexamers form sheets that form the facets of the polyhedral carboxysome. The shell is 4.5 nm thick, as observed for CcmK proteins. In PCC 7942 there are several CcmK paralogs with presumably functional differences; replacing the central pore residues (34-37) with those of CcmK2 from this organism (Tyr-Glu-Lys-Ile) allows the bacterium to make carboxysomes, but the expression level is too low to know if the carboxysome is functional for CO(2) fixation. This subunit probably makes both homohexamers and heterohexamers with CcmK3. The CcmK3-CcmK4 heterohexmers have been suggested to cap other hexamers, perhaps to alter metabolite flux. This chain is Carboxysome shell protein CcmK4, found in Synechococcus elongatus (strain ATCC 33912 / PCC 7942 / FACHB-805) (Anacystis nidulans R2).